The sequence spans 466 residues: Argininosuccinate lyase (466 aa).

The 2-(N(omega)-L-arginino)succinate site is built by Ser-27, Asn-114, and Thr-159. Residue His-160 is the Proton acceptor of the active site. Ser-281 functions as the Proton donor in the catalytic mechanism. The 2-(N(omega)-L-arginino)succinate site is built by Asn-289, Tyr-321, Gln-326, and Lys-329.

The protein belongs to the lyase 1 family. Argininosuccinate lyase subfamily. In terms of assembly, homotetramer. In terms of tissue distribution, eye lens.

The catalysed reaction is 2-(N(omega)-L-arginino)succinate = fumarate + L-arginine. It participates in amino-acid biosynthesis; L-arginine biosynthesis; L-arginine from L-ornithine and carbamoyl phosphate: step 3/3. Functionally, delta crystallin, the principal crystallin in embryonic lens, is found only in birds and reptiles. This protein may also function as an enzymatically active argininosuccinate lyase. The sequence is that of Argininosuccinate lyase (ASL2) from Gallus gallus (Chicken).